The sequence spans 329 residues: Mo25-like protein (329 aa).

Belongs to the Mo25 family.

This chain is Mo25-like protein (pmo25), found in Schizosaccharomyces pombe (strain 972 / ATCC 24843) (Fission yeast).